A 633-amino-acid chain; its full sequence is MSDETHHSPDGKMSIRKLSYLAVGSVGVVYGDIGTSPLYAFREALKPVAADGLTRGEVISLVSLMFWALTIIVTMKYVLFLLRADNDGEGGTLSLLALLMKTANGHTAVLMLLGLLGAALFLGDAMITPALSVLSAVEGLKLVTPTLSDYIVPISVAILALLFAIQSHGTGAVARFFGPITAIWFIVMGLAGIMHIADDYGILAALNPWYAVNFLMNEGFLGVVVLGAVFLTVTGAEALYADLGHFGRRPIQWAWFVLVFPSLTLNYLGQGALVLREPLAMSDPFFLMYPHWALLPVVILATMATIIASQAVITGAFSLTRQAIHLGFLPRMEILITSETNTGQIFLPSVNAILFFGVIFLVLSFKTSDALATAYGISVTGAMVVTSIMAFEFVRVRWNWTLPMAIAVLTPLLLLEFVFLGANLLKIHDGGYVPVLIATAFTVIMWTWRRGSAILMEKTRHTDIPLSSFVSSIERKSDHSPAHVPGTAIFLTSDPESAPAALLHNLKHNHVLHDKNVILTIRTTNKPRVPQEDRYSVEKVSDRFSRVELRFGFMESQNVSQALATLRKTGLKFDIMSTSFYLGRRKLVPDAKSGMPHWQDRLYIALANAATDPSDYFRLPANRVVELGSHVII.

The next 12 helical transmembrane spans lie at 21–41 (LAVG…LYAF), 61–81 (LVSL…VLFL), 107–127 (TAVL…DAMI), 145–165 (PTLS…LFAI), 176–196 (FFGP…IMHI), 219–239 (GFLG…AEAL), 255–275 (WFVL…ALVL), 293–313 (ALLP…QAVI), 345–365 (IFLP…VLSF), 371–391 (LATA…IMAF), 402–422 (LPMA…FLGA), and 427–447 (IHDG…IMWT).

This sequence belongs to the HAK/KUP transporter (TC 2.A.72) family.

The protein resides in the cell inner membrane. The catalysed reaction is K(+)(in) + H(+)(in) = K(+)(out) + H(+)(out). In terms of biological role, transport of potassium into the cell. Likely operates as a K(+):H(+) symporter. In Rhizobium rhizogenes (strain K84 / ATCC BAA-868) (Agrobacterium radiobacter), this protein is Probable potassium transport system protein Kup.